Here is a 290-residue protein sequence, read N- to C-terminus: MILLQQVWLPLPNRPSTSPPMSVAARSTRTLQLPPQKAFGQEASLPLAGEEDLAKRGEPDSALEELCKPLFCKLCNVTLNSAQQAQAHYQGKNHGKKLRNYYAANSCPPPARVSSVVAEPVATPLVPVPPQVGSCKPGGRVILATENDYCKLCDASFSSPAVAQAHYQGKNHAKRLRLAEAQSHSFSDSAEAGQRRTRKEGSEFKMVATRRNMNPVQSNSGPYFNARSRQRIPRDLAMCVTPSGQFYCSMCNVGAGEEVEFRQHLESKQHKSKVSEQRYRSEMENLGYVQ.

2 consecutive Matrin-type zinc fingers follow at residues 70–100 (LFCKLCNVTLNSAQQAQAHYQGKNHGKKLRN) and 148–178 (DYCKLCDASFSSPAVAQAHYQGKNHAKRLRL). Disordered stretches follow at residues 182–203 (QSHSFSDSAEAGQRRTRKEGSE) and 266–290 (ESKQHKSKVSEQRYRSEMENLGYVQ). The segment at 246–276 (FYCSMCNVGAGEEVEFRQHLESKQHKSKVSE) adopts a Matrin-type 3 zinc-finger fold. Residues 266–283 (ESKQHKSKVSEQRYRSEM) show a composition bias toward basic and acidic residues.

In terms of assembly, interacts with dsRNA. As to expression, constitutively expressed in brain and testis. Also expressed in lung, kidney and spleen after whole body gamma irradiation.

It localises to the nucleus. It is found in the nucleolus. Its function is as follows. Acts as a bona fide target gene of p53/TP53. May play a role in the TP53-dependent growth regulatory pathway. May contribute to TP53-mediated apoptosis by regulation of TP53 expression and translocation to the nucleus and nucleolus. The sequence is that of Zinc finger matrin-type protein 3 from Mus musculus (Mouse).